The chain runs to 340 residues: DNA repair protein RAD51 homolog B (340 aa).

A disordered region spans residues methionine 1–glycine 22. The region spanning threonine 49–alanine 78 is the HhH domain. ATP is bound at residue glycine 128–threonine 135.

This sequence belongs to the RecA family. RAD51 subfamily. In terms of assembly, self-associates and may interact with XRCC3 homolog. As to expression, highly expressed in mitotic and meiotic tissues, but low levels in differentiated tissues.

The protein resides in the nucleus. Its function is as follows. Binds to single and double-stranded DNA and exhibits DNA-dependent ATPase activity. Unwinds duplex DNA. Component of the meiotic recombination pathway. Seems to play a role in mediating chromosome homology search, chromosome pairing and synapsis at early stages and probably chromosome crossing-over at later stages in meiosis. Probably is involved in the repair of meiotic double strand breaks (DBSs) and in homologous recombination. In Zea mays (Maize), this protein is DNA repair protein RAD51 homolog B (RAD51B).